The following is a 273-amino-acid chain: Putative phosphoenolpyruvate synthase regulatory protein (273 aa).

153–160 (AVSRAGKT) contributes to the ADP binding site.

This sequence belongs to the pyruvate, phosphate/water dikinase regulatory protein family. PSRP subfamily.

It catalyses the reaction [pyruvate, water dikinase] + ADP = [pyruvate, water dikinase]-phosphate + AMP + H(+). The catalysed reaction is [pyruvate, water dikinase]-phosphate + phosphate + H(+) = [pyruvate, water dikinase] + diphosphate. Functionally, bifunctional serine/threonine kinase and phosphorylase involved in the regulation of the phosphoenolpyruvate synthase (PEPS) by catalyzing its phosphorylation/dephosphorylation. This is Putative phosphoenolpyruvate synthase regulatory protein from Stenotrophomonas maltophilia (strain K279a).